The sequence spans 668 residues: DNA mismatch repair protein MutL (668 aa).

The segment at Thr437 to Lys459 is disordered. The span at Tyr438–Lys459 shows a compositional bias: polar residues.

The protein belongs to the DNA mismatch repair MutL/HexB family.

This protein is involved in the repair of mismatches in DNA. It is required for dam-dependent methyl-directed DNA mismatch repair. May act as a 'molecular matchmaker', a protein that promotes the formation of a stable complex between two or more DNA-binding proteins in an ATP-dependent manner without itself being part of a final effector complex. This Leuconostoc citreum (strain KM20) protein is DNA mismatch repair protein MutL.